The following is a 227-amino-acid chain: Phosphoribosylformylglycinamidine synthase subunit PurQ (227 aa).

In terms of domain architecture, Glutamine amidotransferase type-1 spans 3–225 (FAVIVLPGSN…VKNWRETHVT (223 aa)). The active-site Nucleophile is cysteine 86. Catalysis depends on residues histidine 194 and glutamate 196.

In terms of assembly, part of the FGAM synthase complex composed of 1 PurL, 1 PurQ and 2 PurS subunits.

Its subcellular location is the cytoplasm. The catalysed reaction is N(2)-formyl-N(1)-(5-phospho-beta-D-ribosyl)glycinamide + L-glutamine + ATP + H2O = 2-formamido-N(1)-(5-O-phospho-beta-D-ribosyl)acetamidine + L-glutamate + ADP + phosphate + H(+). It catalyses the reaction L-glutamine + H2O = L-glutamate + NH4(+). Its pathway is purine metabolism; IMP biosynthesis via de novo pathway; 5-amino-1-(5-phospho-D-ribosyl)imidazole from N(2)-formyl-N(1)-(5-phospho-D-ribosyl)glycinamide: step 1/2. In terms of biological role, part of the phosphoribosylformylglycinamidine synthase complex involved in the purines biosynthetic pathway. Catalyzes the ATP-dependent conversion of formylglycinamide ribonucleotide (FGAR) and glutamine to yield formylglycinamidine ribonucleotide (FGAM) and glutamate. The FGAM synthase complex is composed of three subunits. PurQ produces an ammonia molecule by converting glutamine to glutamate. PurL transfers the ammonia molecule to FGAR to form FGAM in an ATP-dependent manner. PurS interacts with PurQ and PurL and is thought to assist in the transfer of the ammonia molecule from PurQ to PurL. The protein is Phosphoribosylformylglycinamidine synthase subunit PurQ of Bacillus subtilis (strain 168).